The chain runs to 54 residues: Large ribosomal subunit protein bL32c (54 aa).

Belongs to the bacterial ribosomal protein bL32 family.

The protein resides in the plastid. It localises to the chloroplast. In Gossypium barbadense (Sea Island cotton), this protein is Large ribosomal subunit protein bL32c.